Here is a 673-residue protein sequence, read N- to C-terminus: Gametogenetin (673 aa).

The interval 1-599 (MGNVQSEPSA…TSTAGASNKG (599 aa)) is disordered. A compositionally biased stretch (basic and acidic residues) spans 14–30 (SRKEQASDRASDSRRTP). Residues 70–83 (ASSSPLPLTLELPS) show a composition bias toward low complexity. The segment at 125–506 (RGLLEASHRG…APTPPSTLSP (382 aa)) is interaction with GGNBP1. The segment covering 161–178 (PAPPPTPLEPRKQLPPAP) has biased composition (pro residues). Positions 192-202 (LASSATSPTES) are enriched in polar residues. Residues 257-268 (SASGPLAAKASP) show a composition bias toward low complexity. At serine 399 the chain carries Phosphoserine. Residues 413 to 424 (PRRPTPALLAPP) are compositionally biased toward low complexity. Pro residues predominate over residues 438 to 475 (RPVPPSPQQIPPLPPPPPTPPATPPPAPPPTPQPPALP). The segment covering 504 to 531 (LSPTAAADQVPAATPATVTSQVPATATA) has biased composition (low complexity). An interactions with ZNF403/GGNBP2 and OAZ3 region spans residues 511 to 673 (DQVPAATPAT…HYDLQATHST (163 aa)). Residues 542–551 (TRTRRNKGPR) are compositionally biased toward basic residues.

Isoform 1 and isoform 3 interact with FANCL. Isoform 1 interacts with GGNBP1, ZNF403/GGNBP2 and OAZ3. Isoform 2 interacts with GGNBP1. In terms of tissue distribution, testis-specific. Specifically expressed in the germ cells and not in the somatic, Sertoli, or Leydig cells. In adult testis, expression starts in stage VIII pachytene spermatocytes, increases in stage IX and X pachytene spermatocytes, and culminates in stage XI diplotene spermatocytes and the meiotic cells in stage XII. Expression decreases slightly in step 1-3 spermatids, further decreases in step 4-11 spermatids, and is no longer detectable in step 12 spermatids and beyond. Isoform 2 is mainly expressed in testis.

The protein resides in the cytoplasm. It localises to the perinuclear region. It is found in the cytoplasmic vesicle. Its subcellular location is the nucleus. The protein localises to the nucleolus. Its function is as follows. May be involved in spermatogenesis. This chain is Gametogenetin (Ggn), found in Mus musculus (Mouse).